The chain runs to 441 residues: Serine carboxypeptidase-like 3 (441 aa).

A signal peptide spans methionine 1–alanine 30. 3 disulfides stabilise this stretch: cysteine 88-cysteine 331, cysteine 252-cysteine 266, and cysteine 290-cysteine 297. The N-linked (GlcNAc...) asparagine glycan is linked to asparagine 109. Serine 184 is a catalytic residue. Asparagine 350 is a glycosylation site (N-linked (GlcNAc...) asparagine). Aspartate 366 is a catalytic residue. N-linked (GlcNAc...) asparagine glycosylation occurs at asparagine 382. Histidine 419 is an active-site residue.

The protein belongs to the peptidase S10 family. In terms of tissue distribution, expressed in roots.

It is found in the secreted. In terms of biological role, probable carboxypeptidase. The chain is Serine carboxypeptidase-like 3 (SCPL3) from Arabidopsis thaliana (Mouse-ear cress).